The sequence spans 476 residues: Protein transport protein Sec61 subunit alpha isoform A (476 aa).

The Cytoplasmic segment spans residues 2–33 (GIKFLEVIKPFCAVLPEIQKPERKIQFREKVL). Residues 34–53 (WTAITLFIFLVCCQIPLFGI) form a helical membrane-spanning segment. The Lumenal segment spans residues 54–76 (MSSDSADPFYWMRVILASNRGTL). A helical transmembrane segment spans residues 77–96 (MELGISPIVTSGLIMQLLAG). Residues 97 to 117 (AKIIEVGDTPKDRALFNGAQK) are Cytoplasmic-facing. A helical transmembrane segment spans residues 118-138 (LFGMIITIGQSIVYVMTGMYG). The Lumenal portion of the chain corresponds to 139–144 (DPSEMG). A helical membrane pass occupies residues 145–165 (AGICLLIIIQLFVAGLIVLLL). The Cytoplasmic portion of the chain corresponds to 166 to 172 (DELLQKG). The helical transmembrane segment at 173–193 (YGLGSGISLFIATNICETIVW) threads the bilayer. Residues 194–240 (KAFSPTTVNTGRGTEFEGAIIALFHLLATRTDKVRALREAFYRQNLP) are Lumenal-facing. A helical membrane pass occupies residues 241 to 261 (NLLNLIATVFVFAVVIYFQGF). Topologically, residues 262-288 (RVDLPIKSARYRGQYNTYPIKLFYTSN) are cytoplasmic. Residues 289 to 309 (IPIILQSALVSNLYVISQMLS) traverse the membrane as a helical segment. The Lumenal segment spans residues 310 to 354 (TRFSGNFLVNLLGTWSDTSTGGPARAYPVGGLCYFLSPPESFGSV). A helical membrane pass occupies residues 355-375 (LDDPIHAAIYIVFMLGSCAFF). Over 376-420 (SKTWIEVSGSSAKDVAKQLKEQQMVMGGHRETSMVHELNRYIPTA) the chain is Cytoplasmic. A helical membrane pass occupies residues 421 to 441 (AAFGGLCIGGLSVMADFLGAI). The Lumenal segment spans residues 442–445 (GSGT). The helical transmembrane segment at 446–462 (GILLAVTIIYQYFEIFV) threads the bilayer. Residues 463–476 (KEQSEMGSMGALLF) are Cytoplasmic-facing.

This sequence belongs to the SecY/SEC61-alpha family. In terms of assembly, the SEC61 channel-forming translocon complex consists of channel-forming core components SEC61A1, SEC61B and SEC61G and different auxiliary components such as SEC62 and SEC63. The SEC61 channel associates with the multi-pass translocon (MPT) complex.

It is found in the endoplasmic reticulum membrane. In terms of biological role, component of SEC61 channel-forming translocon complex that mediates transport of signal peptide-containing precursor polypeptides across the endoplasmic reticulum (ER). Forms a ribosome receptor and a gated pore in the ER membrane, both functions required for cotranslational translocation of nascent polypeptides. May cooperate with auxiliary protein SEC62, SEC63 and HSPA5/BiP to enable post-translational transport of small presecretory proteins. The SEC61 channel is also involved in ER membrane insertion of transmembrane proteins: it mediates membrane insertion of the first few transmembrane segments of proteins, while insertion of subsequent transmembrane regions of multi-pass membrane proteins is mediated by the multi-pass translocon (MPT) complex. In Oncorhynchus mykiss (Rainbow trout), this protein is Protein transport protein Sec61 subunit alpha isoform A (sec61aa).